Reading from the N-terminus, the 314-residue chain is DNA-directed RNA polymerase subunit alpha (314 aa).

Residues Met1–Thr228 form an alpha N-terminal domain (alpha-NTD) region. Residues Glu246–Asp314 are alpha C-terminal domain (alpha-CTD).

The protein belongs to the RNA polymerase alpha chain family. As to quaternary structure, homodimer. The RNAP catalytic core consists of 2 alpha, 1 beta, 1 beta' and 1 omega subunit. When a sigma factor is associated with the core the holoenzyme is formed, which can initiate transcription.

It carries out the reaction RNA(n) + a ribonucleoside 5'-triphosphate = RNA(n+1) + diphosphate. In terms of biological role, DNA-dependent RNA polymerase catalyzes the transcription of DNA into RNA using the four ribonucleoside triphosphates as substrates. In Bacillus pumilus (strain SAFR-032), this protein is DNA-directed RNA polymerase subunit alpha.